We begin with the raw amino-acid sequence, 232 residues long: LOB domain-containing protein 11 (232 aa).

Residues 1–50 (MLKMEINGGVATPTASAVAKVTETTTPVNSPSPTSSPPPPPSPQQPPQPP) form a disordered region. Positions 34-50 (TSSPPPPPSPQQPPQPP) are enriched in pro residues. The region spanning 54–155 (SPCAACKILR…AQLAKTQVEL (102 aa)) is the LOB domain. Residues 181–218 (EQGQQKMSFESSFESGDEFISSPDEESNDLGFLEDNNN) are disordered. Positions 188–202 (SFESSFESGDEFISS) are enriched in low complexity.

Belongs to the LOB domain-containing protein family. As to expression, expressed in young shoots, stems, leaves and flowers.

This chain is LOB domain-containing protein 11 (LBD11), found in Arabidopsis thaliana (Mouse-ear cress).